We begin with the raw amino-acid sequence, 590 residues long: Guanylate-binding protein 1 (590 aa).

The GTPase domain (Globular) stretch occupies residues M1–C309. The 242-residue stretch at T35 to K276 folds into the GB1/RHD3-type G domain. Residues G45–S52, L67–S69, and D97–L101 each bind GTP. Residue S156 is modified to Phosphoserine. Position 587 is a cysteine methyl ester (C587). C587 carries the S-farnesyl cysteine lipid modification. T588 is subject to Phosphothreonine. The propeptide at T588–S590 is removed in mature form.

This sequence belongs to the TRAFAC class dynamin-like GTPase superfamily. GB1/RHD3 GTPase family. GB1 subfamily. In terms of assembly, homodimer; homodimerization occurs upon GTP-binding and is required for the second hydrolysis step from GDP to GMP. Undergoes conformational changes and oligomerization upon GTP-binding and hydrolysis. Heterodimer with other family members, including GBP2, GBP3, GBP4 and GBP5. Dimerization regulates subcellular location to membranous structures. Interacts with SQSTM1. Interacts (when phosphorylated) with 14-3-3 protein sigma (SFN); leading to GBP1 retention in the cytosol and inactivation. In terms of processing, isoprenylation is required for proper subcellular location. Phosphorylated at Ser-156 by PIM1 in absence of infection, inhibits GBP1: phosphorylation promotes interaction with 14-3-3 protein sigma (SFN), leading to GBP1 retention in the cytosol. Dephosphorylated in response to infection, liberating GBP1.

It is found in the cytoplasmic vesicle membrane. The protein resides in the golgi apparatus membrane. It localises to the cell membrane. The protein localises to the cytoplasm. Its subcellular location is the cytosol. It is found in the secreted. It catalyses the reaction GTP + H2O = GDP + phosphate + H(+). The catalysed reaction is GDP + H2O = GMP + phosphate + H(+). In terms of biological role, interferon (IFN)-inducible GTPase that plays important roles in innate immunity against a diverse range of bacterial, viral and protozoan pathogens. Hydrolyzes GTP to GMP in two consecutive cleavage reactions: GTP is first hydrolyzed to GDP and then to GMP in a processive manner. Following infection, recruited to the pathogen-containing vacuoles or vacuole-escaped bacteria and promotes both inflammasome assembly and autophagy. Acts as a positive regulator of inflammasome assembly by facilitating the detection of inflammasome ligands from pathogens. Involved in the lysis of pathogen-containing vacuoles, releasing pathogens into the cytosol. Following pathogen release in the cytosol, forms a protein coat in a GTPase-dependent manner that encapsulates pathogens and promotes the detection of ligands by pattern recognition receptors. Plays a key role in inflammasome assembly in response to infection by Gram-negative bacteria: following pathogen release in the cytosol, forms a protein coat that encapsulates Gram-negative bacteria and directly binds to lipopolysaccharide (LPS), disrupting the O-antigen barrier and unmasking lipid A that is that detected by the non-canonical inflammasome effector CASP4/CASP11. Also promotes recruitment of proteins that mediate bacterial cytolysis, leading to release double-stranded DNA (dsDNA) that activates the AIM2 inflammasome. Involved in autophagy by regulating bacteriolytic peptide generation via its interaction with ubiquitin-binding protein SQSTM1, which delivers monoubiquitinated proteins to autolysosomes for the generation of bacteriolytic peptides. Confers protection to several pathogens, including the bacterial pathogens L.monocytogenes and M.bovis BCG as well as the protozoan pathogen T.gondii. Exhibits antiviral activity against influenza virus. The polypeptide is Guanylate-binding protein 1 (GBP1) (Chlorocebus aethiops (Green monkey)).